Reading from the N-terminus, the 514-residue chain is Beta-secretase 2 (514 aa).

An N-terminal signal peptide occupies residues 1–19; that stretch reads MGALLRALLLLVLAQWLLS. The propeptide occupies 20-62; it reads AVPALAPAPFTLPLQVAGATNHRASAVPGLGTPELPRADGLAL. Residues 20 to 469 lie on the Extracellular side of the membrane; that stretch reads AVPALAPAPF…NEPILWIVSY (450 aa). Residues 88–425 form the Peptidase A1 domain; the sequence is YYLEMLIGTP…DRAQRRVGFA (338 aa). D106 is a catalytic residue. N166 carries N-linked (GlcNAc...) asparagine glycosylation. 3 disulfides stabilise this stretch: C229–C429, C288–C453, and C340–C389. D299 is an active-site residue. The N-linked (GlcNAc...) asparagine glycan is linked to N362. A helical transmembrane segment spans residues 470 to 490; it reads ALMSVCGAILLVLILLLLLPL. At 491–514 the chain is on the cytoplasmic side; that stretch reads HCRHAPRDPEVVNDESSLVRHRWK.

It belongs to the peptidase A1 family. As to quaternary structure, monomer. Interacts with RTN3 and RTN4. Post-translationally, undergoes autoproteolytic cleavage. Glycosylated. High expression in pancreatic islets. Expressed at much lower levels in the pituitary, colon, and ovaries and is nearly absent from all the other tissues.

The protein resides in the cell membrane. Its subcellular location is the golgi apparatus. It is found in the endoplasmic reticulum. The protein localises to the endosome. It localises to the melanosome. The enzyme catalyses Broad endopeptidase specificity. Cleaves Glu-Val-Asn-Leu-|-Asp-Ala-Glu-Phe in the Swedish variant of Alzheimer's amyloid precursor protein.. Responsible for the proteolytic processing of the amyloid precursor protein (APP). Cleaves APP, between residues 690 and 691, leading to the generation and extracellular release of beta-cleaved soluble APP, and a corresponding cell-associated C-terminal fragment which is later released by gamma-secretase. It has also been shown that it can cleave APP between residues 671 and 672. Involved in the proteolytic shedding of PMEL at early stages of melanosome biogenesis. Cleaves PMEL within the M-beta fragment to release the amyloidogenic PMEL luminal fragment containing M-alpha and a small portion of M-beta N-terminus. This is a prerequisite step for subsequent processing and assembly of PMEL fibrils into amyloid sheets. Responsible also for the proteolytic processing of CLTRN in pancreatic beta cells. In Mus musculus (Mouse), this protein is Beta-secretase 2 (Bace2).